A 305-amino-acid polypeptide reads, in one-letter code: UDP-3-O-acyl-N-acetylglucosamine deacetylase (305 aa).

The Zn(2+) site is built by His79, His238, and Asp242. Residue His265 is the Proton donor of the active site.

This sequence belongs to the LpxC family. The cofactor is Zn(2+).

It carries out the reaction a UDP-3-O-[(3R)-3-hydroxyacyl]-N-acetyl-alpha-D-glucosamine + H2O = a UDP-3-O-[(3R)-3-hydroxyacyl]-alpha-D-glucosamine + acetate. It participates in glycolipid biosynthesis; lipid IV(A) biosynthesis; lipid IV(A) from (3R)-3-hydroxytetradecanoyl-[acyl-carrier-protein] and UDP-N-acetyl-alpha-D-glucosamine: step 2/6. Catalyzes the hydrolysis of UDP-3-O-myristoyl-N-acetylglucosamine to form UDP-3-O-myristoylglucosamine and acetate, the committed step in lipid A biosynthesis. This chain is UDP-3-O-acyl-N-acetylglucosamine deacetylase, found in Proteus mirabilis (strain HI4320).